A 692-amino-acid polypeptide reads, in one-letter code: Polyribonucleotide nucleotidyltransferase (692 aa).

Asp-484 and Asp-490 together coordinate Mg(2+). Positions 551-614 (PKYFIHKISQ…ALVERVKSIT (64 aa)) constitute a KH domain. The S1 motif domain maps to 620–688 (GAVYTGKVKT…NRGRIRLSRK (69 aa)).

Belongs to the polyribonucleotide nucleotidyltransferase family. The cofactor is Mg(2+).

It is found in the cytoplasm. The enzyme catalyses RNA(n+1) + phosphate = RNA(n) + a ribonucleoside 5'-diphosphate. Functionally, involved in mRNA degradation. Catalyzes the phosphorolysis of single-stranded polyribonucleotides processively in the 3'- to 5'-direction. The chain is Polyribonucleotide nucleotidyltransferase from Desulfotalea psychrophila (strain LSv54 / DSM 12343).